Reading from the N-terminus, the 254-residue chain is Isoprenyl transferase (254 aa).

D12 is a catalytic residue. D12 is a Mg(2+) binding site. Residues 13 to 16 (GNGR), W17, R25, H29, and 57 to 59 (SSE) each bind substrate. Residue N60 is the Proton acceptor of the active site. Substrate-binding positions include W61, R63, R180, and 186-188 (RLS). E199 lines the Mg(2+) pocket.

The protein belongs to the UPP synthase family. In terms of assembly, homodimer. It depends on Mg(2+) as a cofactor.

Its function is as follows. Catalyzes the condensation of isopentenyl diphosphate (IPP) with allylic pyrophosphates generating different type of terpenoids. In Brucella suis biovar 1 (strain 1330), this protein is Isoprenyl transferase.